Consider the following 270-residue polypeptide: tRNA pseudouridine synthase A (270 aa).

Catalysis depends on aspartate 60, which acts as the Nucleophile. The RNA binding stretch occupies residues 107–111 (FHARF). A substrate-binding site is contributed by tyrosine 118. Residues 168–172 (QCQSR) are interaction with tRNA.

Belongs to the tRNA pseudouridine synthase TruA family. In terms of assembly, homodimer.

It carries out the reaction uridine(38/39/40) in tRNA = pseudouridine(38/39/40) in tRNA. Functionally, formation of pseudouridine at positions 38, 39 and 40 in the anticodon stem and loop of transfer RNAs. The chain is tRNA pseudouridine synthase A from Citrobacter koseri (strain ATCC BAA-895 / CDC 4225-83 / SGSC4696).